We begin with the raw amino-acid sequence, 586 residues long: Probable zinc metalloprotease EGY3, chloroplastic (586 aa).

The N-terminal 54 residues, 1–54 (MSSSSLVTSLLFSSSSSSNTATSTSSRRSFSLFSKNQYCKPSPLRRSSSLLLVR), are a transit peptide targeting the chloroplast. Over residues 62–73 (EEKAAPAAESHH) the composition is skewed to basic and acidic residues. The tract at residues 62 to 118 (EEKAAPAAESHHAGGGQDDAATASHHAVEGENGVADADGGGVKKSKEELEEEEQQEV) is disordered. Residues 103 to 195 (VKKSKEELEE…NTFKALDLNK (93 aa)) adopt a coiled-coil conformation. Helical transmembrane passes span 287–307 (LSAVALAVTTFGTIAIMSGFF), 318–338 (VSDVLPLFAGFLSILGVSEIA), 389–409 (ASAYLTSVALAVSAFVSDGSL), 427–447 (PLLSFVQAVIGPYADELGNVL), 454–474 (VGVPVDPLAFAGLLGIVVTSL), 506–526 (VALGAGAIIGGSVLCLAWGLF), and 550–570 (YAWGLVLAVVCLLTLFPNGGG).

Belongs to the peptidase M50B family.

The protein localises to the plastid. Its subcellular location is the chloroplast membrane. Probable membrane-associated metalloprotease that may be involved in chloroplast development. The chain is Probable zinc metalloprotease EGY3, chloroplastic (EGY3) from Oryza sativa subsp. indica (Rice).